The sequence spans 364 residues: Fructose-bisphosphate aldolase C (364 aa).

Tyr-5 carries the post-translational modification Phosphotyrosine. Phosphoserine occurs at positions 36, 39, and 45. Residue Arg-56 coordinates substrate. Lys-111 is modified (N6-acetyllysine). Ser-132 is modified (phosphoserine). Lys-147 lines the substrate pocket. Glu-188 (proton acceptor) is an active-site residue. The active-site Schiff-base intermediate with dihydroxyacetone-P is Lys-230.

Belongs to the class I fructose-bisphosphate aldolase family. As to quaternary structure, homotetramer. Interacts with ATP6V1E1. May interact with PLD2.

It catalyses the reaction beta-D-fructose 1,6-bisphosphate = D-glyceraldehyde 3-phosphate + dihydroxyacetone phosphate. Its pathway is carbohydrate degradation; glycolysis; D-glyceraldehyde 3-phosphate and glycerone phosphate from D-glucose: step 4/4. This Homo sapiens (Human) protein is Fructose-bisphosphate aldolase C (ALDOC).